Reading from the N-terminus, the 83-residue chain is Large ribosomal subunit protein bL31B (83 aa).

Belongs to the bacterial ribosomal protein bL31 family. Type B subfamily. As to quaternary structure, part of the 50S ribosomal subunit.

The sequence is that of Large ribosomal subunit protein bL31B from Lactobacillus johnsonii (strain CNCM I-12250 / La1 / NCC 533).